The chain runs to 136 residues: Large ribosomal subunit protein uL14 (136 aa).

This sequence belongs to the universal ribosomal protein uL14 family.

The protein is Large ribosomal subunit protein uL14 (rpl23) of Dictyostelium discoideum (Social amoeba).